A 166-amino-acid polypeptide reads, in one-letter code: Large ribosomal subunit protein uL10 (166 aa).

It belongs to the universal ribosomal protein uL10 family. Part of the ribosomal stalk of the 50S ribosomal subunit. The N-terminus interacts with L11 and the large rRNA to form the base of the stalk. The C-terminus forms an elongated spine to which L12 dimers bind in a sequential fashion forming a multimeric L10(L12)X complex.

Functionally, forms part of the ribosomal stalk, playing a central role in the interaction of the ribosome with GTP-bound translation factors. This Listeria monocytogenes serotype 4b (strain CLIP80459) protein is Large ribosomal subunit protein uL10.